The primary structure comprises 71 residues: IRCFITPDVTSQACPDGHVCYTKMWCDNFCGMRGKRVDLGCAATCPTVKPGVDIKCCSTDNCNPFPTRKRS.

Disulfide bonds link Cys3-Cys20, Cys14-Cys41, Cys26-Cys30, Cys45-Cys56, and Cys57-Cys62.

The protein belongs to the three-finger toxin family. Long-chain subfamily. Type II alpha-neurotoxin sub-subfamily. In terms of tissue distribution, expressed by the venom gland.

The protein localises to the secreted. Functionally, binds with high affinity to muscular (alpha-1/CHRNA1) and neuronal (alpha-7/CHRNA7) nicotinic acetylcholine receptor (nAChR) and inhibits acetylcholine from binding to the receptor, thereby impairing neuromuscular and neuronal transmission. This Naja haje haje (Egyptian cobra) protein is Long neurotoxin 1.